A 1131-amino-acid polypeptide reads, in one-letter code: Homeobox-DDT domain protein RLT3 (1131 aa).

A DNA-binding region (homeobox; TALE-type) is located at residues 2–56 (KRKSPLQVQALEGFYLEQMYPTPKEMEDLGKSLGLTLKEVRGWFKRRRSRGKGVK). Positions 239-251 (LQKRSTEKKRRSI) are enriched in basic residues. Residues 239–264 (LQKRSTEKKRRSIHREAELNKDETQR) are disordered. Positions 252–264 (HREAELNKDETQR) are enriched in basic and acidic residues. One can recognise a DDT domain in the interval 365 to 424 (PESVKKLFKVVHFLYTYSVTLDIGPFTLDEFTRAFHDKDSLLLGKIHLSLLKLLLLDVET). The disordered stretch occupies residues 579-609 (EDPDKSQSDSDDSGSVDDESDDCSISSGDEI). The segment covering 587 to 600 (DSDDSGSVDDESDD) has biased composition (acidic residues).

The protein resides in the nucleus. Functionally, transcriptional regulator required for the maintenance of the plant vegetative phase. May prevent the early activation of the vegetative-to-reproductive transition by regulating key genes that contribute to flower timing. The protein is Homeobox-DDT domain protein RLT3 of Arabidopsis thaliana (Mouse-ear cress).